The following is a 66-amino-acid chain: Large ribosomal subunit protein uL29c (66 aa).

It belongs to the universal ribosomal protein uL29 family.

The protein localises to the plastid. Its subcellular location is the chloroplast. The chain is Large ribosomal subunit protein uL29c from Gracilaria tenuistipitata var. liui (Red alga).